Reading from the N-terminus, the 210-residue chain is Protein RFS1 (210 aa).

Residues 4–203 (VAILIYSVDD…RVHQLQGKAF (200 aa)) form the Flavodoxin-like domain.

It belongs to the WrbA family.

The protein localises to the cytoplasm. It localises to the membrane raft. In Saccharomyces cerevisiae (strain ATCC 204508 / S288c) (Baker's yeast), this protein is Protein RFS1 (RFS1).